Consider the following 393-residue polypeptide: Argininosuccinate synthase (393 aa).

Residues 7–15 and A34 each bind ATP; that span reads AYSGGLDTS. L-citrulline is bound by residues Y85 and S90. G115 provides a ligand contact to ATP. Residues T117, N121, and D122 each contribute to the L-aspartate site. N121 provides a ligand contact to L-citrulline. L-citrulline-binding residues include R125, S176, S185, E261, and Y273.

The protein belongs to the argininosuccinate synthase family. Type 1 subfamily. Homotetramer.

Its subcellular location is the cytoplasm. The catalysed reaction is L-citrulline + L-aspartate + ATP = 2-(N(omega)-L-arginino)succinate + AMP + diphosphate + H(+). Its pathway is amino-acid biosynthesis; L-arginine biosynthesis; L-arginine from L-ornithine and carbamoyl phosphate: step 2/3. This is Argininosuccinate synthase from Ehrlichia chaffeensis (strain ATCC CRL-10679 / Arkansas).